Here is a 216-residue protein sequence, read N- to C-terminus: Probable transaldolase (216 aa).

The active-site Schiff-base intermediate with substrate is K83.

It belongs to the transaldolase family. Type 3B subfamily.

It localises to the cytoplasm. The enzyme catalyses D-sedoheptulose 7-phosphate + D-glyceraldehyde 3-phosphate = D-erythrose 4-phosphate + beta-D-fructose 6-phosphate. The protein operates within carbohydrate degradation; pentose phosphate pathway; D-glyceraldehyde 3-phosphate and beta-D-fructose 6-phosphate from D-ribose 5-phosphate and D-xylulose 5-phosphate (non-oxidative stage): step 2/3. Its function is as follows. Transaldolase is important for the balance of metabolites in the pentose-phosphate pathway. This is Probable transaldolase from Shouchella clausii (strain KSM-K16) (Alkalihalobacillus clausii).